The primary structure comprises 397 residues: DnaJ homolog subfamily A member 1 (397 aa).

Residues 6 to 68 (TYYDVLGVKP…KKRELYDKGG (63 aa)) form the J domain. Lys-66 carries the N6-acetyllysine modification. Ser-83 is modified (phosphoserine). Residues 121-205 (GATRKLALQK…CNGRKIVREK (85 aa)) form a CR-type zinc finger. Zn(2+) contacts are provided by Cys-134, Cys-137, Cys-150, Cys-153, Cys-177, Cys-180, Cys-193, and Cys-196. 4 CXXCXGXG motif repeats span residues 134–141 (CDKCEGRG), 150–157 (CPNCRGTG), 177–184 (CMECQGHG), and 193–200 (CKSCNGRK). Position 335 is a phosphoserine (Ser-335). The disordered stretch occupies residues 352 to 397 (VEETDEMDQVELVDFDPNQERRRHYNGEAYEDDEHHPRGGVQCQTS). Residues 353–365 (EETDEMDQVELVD) show a composition bias toward acidic residues. Tyr-381 is subject to Phosphotyrosine. Cys-394 carries the post-translational modification Cysteine methyl ester. Cys-394 carries the S-farnesyl cysteine lipid modification. The propeptide at 395–397 (QTS) is removed in mature form.

As to quaternary structure, identified in a complex with HSPA1B and BAX. Interacts with RNF207.

It localises to the membrane. The protein resides in the cytoplasm. It is found in the microsome. The protein localises to the mitochondrion. Its subcellular location is the nucleus. It localises to the perinuclear region. Co-chaperone for HSPA8/Hsc70. Plays a role in protein transport into mitochondria via its role as co-chaperone. Functions as co-chaperone for HSPA1B and negatively regulates the translocation of BAX from the cytosol to mitochondria in response to cellular stress, thereby protecting cells against apoptosis. Stimulates ATP hydrolysis, but not the folding of unfolded proteins mediated by HSPA1A (in vitro). Promotes apoptosis in response to cellular stress mediated by exposure to anisomycin or UV. The chain is DnaJ homolog subfamily A member 1 (DNAJA1) from Chlorocebus aethiops (Green monkey).